Consider the following 781-residue polypeptide: Death domain-containing protein 1 (781 aa).

2 consecutive ZU5 domains span residues 167–301 (IMEK…VSCL) and 302–483 (KKES…VLHL). The region spanning 679–764 (DNLLHWLAEE…DLAEELKFKW (86 aa)) is the Death domain.

This Homo sapiens (Human) protein is Death domain-containing protein 1 (DTHD1).